The chain runs to 549 residues: Glucose-6-phosphate isomerase (549 aa).

An N6-acetyllysine mark is found at Lys80, Lys228, and Lys234. Catalysis depends on Glu355, which acts as the Proton donor. Active-site residues include His386 and Lys514.

Belongs to the GPI family.

The protein resides in the cytoplasm. It carries out the reaction alpha-D-glucose 6-phosphate = beta-D-fructose 6-phosphate. The protein operates within carbohydrate biosynthesis; gluconeogenesis. It functions in the pathway carbohydrate degradation; glycolysis; D-glyceraldehyde 3-phosphate and glycerone phosphate from D-glucose: step 2/4. Functionally, catalyzes the reversible isomerization of glucose-6-phosphate to fructose-6-phosphate. The polypeptide is Glucose-6-phosphate isomerase (Shigella flexneri serotype 5b (strain 8401)).